Consider the following 247-residue polypeptide: DNA polymerase sliding clamp (247 aa).

Belongs to the PCNA family. In terms of assembly, homotrimer. The subunits circularize to form a toroid; DNA passes through its center. Replication factor C (RFC) is required to load the toroid on the DNA.

Sliding clamp subunit that acts as a moving platform for DNA processing. Responsible for tethering the catalytic subunit of DNA polymerase and other proteins to DNA during high-speed replication. This is DNA polymerase sliding clamp from Methanosphaerula palustris (strain ATCC BAA-1556 / DSM 19958 / E1-9c).